A 605-amino-acid chain; its full sequence is Methyl-CpG-binding domain protein 1 (605 aa).

An MBD domain is found at 1 to 69 (MAEDWLDCPA…TLFDFKQGIL (69 aa)). The interval 80 to 123 (AVASKKRKKPSRPAKTRKRQVGPQSGEVRKEAPRDETKADTDTA) is disordered. The segment covering 83–99 (SKKRKKPSRPAKTRKRQ) has biased composition (basic residues). The Nuclear localization signal motif lies at 84–88 (KKRKK). Basic and acidic residues predominate over residues 106–120 (EVRKEAPRDETKADT). A Glycyl lysine isopeptide (Lys-Gly) (interchain with G-Cter in SUMO2) cross-link involves residue K117. CXXC-type zinc fingers lie at residues 169-216 (RMFK…RRCL) and 217-263 (RIVE…RRCL). Residues C176, C179, C182, C188, C191, C194, C210, C215, C225, C228, C231, C237, C240, C243, C257, and C262 each coordinate Zn(2+). Residues 269-308 (RRKGGCDSKMAARRRPGAQPLPPPPPSQSPEPTEPHPRAL) are disordered. Residue K277 forms a Glycyl lysine isopeptide (Lys-Gly) (interchain with G-Cter in SUMO2) linkage. A compositionally biased stretch (pro residues) spans 287–297 (QPLPPPPPSQS). S297 carries the phosphoserine modification. A CXXC-type 3 zinc finger spans residues 330 to 378 (TNRRQNRKCGACAACLRRMDCGRCDFCCDKPKFGGSNQKRQKCRWRQCL). Residues C338, C341, C344, C350, C353, C356, C372, and C377 each contribute to the Zn(2+) site. 2 positions are modified to phosphoserine: S391 and S399. The tract at residues 391–451 (SESEDGAGSP…EAGGGFVLPP (61 aa)) is disordered. The segment covering 403–417 (YRRRKRPSSARRHHL) has biased composition (basic residues). K422 is covalently cross-linked (Glycyl lysine isopeptide (Lys-Gly) (interchain with G-Cter in SUMO2)). Polar residues predominate over residues 426 to 439 (ATRTAQPDHTQAPT). A Glycyl lysine isopeptide (Lys-Gly) (interchain with G-Cter in SUMO2) cross-link involves residue K440. Glycyl lysine isopeptide (Lys-Gly) (interchain with G-Cter in SUMO2); alternate cross-links involve residues K499 and K538. The disordered stretch occupies residues 520-573 (VLVPGCPSKAVDPGLPSVKQEPPDPEEDKEENKDDSASKLAPEEEAGGAGTPVI). The transcriptional repression domain (TRD) stretch occupies residues 529–592 (AVDPGLPSVK…RFRDTAVWLP (64 aa)). A Glycyl lysine isopeptide (Lys-Gly) (interchain with G-Cter in SUMO2) cross-link involves residue K558.

Interacts with OASL, ATF7IP, ATF7IP2 and BAHD1. Binds CHAF1A and the SUV39H1-CBX5 complex via the MBD domain. Binds MGP via the TRD domain. May be part of the MeCP1 complex. Post-translationally, sumoylated, sumoylation may increase interaction with ATF7IP. Widely expressed.

The protein localises to the nucleus. It is found in the nucleus matrix. It localises to the nucleus speckle. Its subcellular location is the chromosome. Its function is as follows. Transcriptional repressor that binds CpG islands in promoters where the DNA is methylated at position 5 of cytosine within CpG dinucleotides. Binding is abolished by the presence of 7-mG that is produced by DNA damage by methylmethanesulfonate (MMS). Acts as transcriptional repressor and plays a role in gene silencing by recruiting ATF7IP, which in turn recruits factors such as the histone methyltransferase SETDB1. Probably forms a complex with SETDB1 and ATF7IP that represses transcription and couples DNA methylation and histone 'Lys-9' trimethylation. Isoform 1 and isoform 2 can also repress transcription from unmethylated promoters. This chain is Methyl-CpG-binding domain protein 1, found in Homo sapiens (Human).